Reading from the N-terminus, the 128-residue chain is Type-4 ice-structuring protein LS-12 (128 aa).

Residues 1-20 (MKFSLVATIVLLALAQGSFA) form the signal peptide. Pyrrolidone carboxylic acid is present on Q21.

The protein belongs to the apolipoprotein A1/A4/E family.

The protein resides in the secreted. In terms of biological role, antifreeze proteins lower the blood freezing point. The chain is Type-4 ice-structuring protein LS-12 from Myoxocephalus octodecemspinosus (Longhorn sculpin).